A 166-amino-acid chain; its full sequence is Large ribosomal subunit protein uL10 (166 aa).

Belongs to the universal ribosomal protein uL10 family. Part of the ribosomal stalk of the 50S ribosomal subunit. The N-terminus interacts with L11 and the large rRNA to form the base of the stalk. The C-terminus forms an elongated spine to which L12 dimers bind in a sequential fashion forming a multimeric L10(L12)X complex.

Forms part of the ribosomal stalk, playing a central role in the interaction of the ribosome with GTP-bound translation factors. In Pseudomonas putida (strain GB-1), this protein is Large ribosomal subunit protein uL10.